The chain runs to 118 residues: Peptidyl-tRNA hydrolase (118 aa).

It belongs to the PTH2 family.

Its subcellular location is the cytoplasm. The enzyme catalyses an N-acyl-L-alpha-aminoacyl-tRNA + H2O = an N-acyl-L-amino acid + a tRNA + H(+). In terms of biological role, the natural substrate for this enzyme may be peptidyl-tRNAs which drop off the ribosome during protein synthesis. This chain is Peptidyl-tRNA hydrolase, found in Thermococcus onnurineus (strain NA1).